The sequence spans 701 residues: Glycine--tRNA ligase beta subunit (701 aa).

Belongs to the class-II aminoacyl-tRNA synthetase family. Tetramer of two alpha and two beta subunits.

Its subcellular location is the cytoplasm. The catalysed reaction is tRNA(Gly) + glycine + ATP = glycyl-tRNA(Gly) + AMP + diphosphate. The sequence is that of Glycine--tRNA ligase beta subunit from Nitratidesulfovibrio vulgaris (strain DSM 19637 / Miyazaki F) (Desulfovibrio vulgaris).